The chain runs to 113 residues: Large ribosomal subunit protein uL22 (113 aa).

The protein belongs to the universal ribosomal protein uL22 family. As to quaternary structure, part of the 50S ribosomal subunit.

This protein binds specifically to 23S rRNA; its binding is stimulated by other ribosomal proteins, e.g. L4, L17, and L20. It is important during the early stages of 50S assembly. It makes multiple contacts with different domains of the 23S rRNA in the assembled 50S subunit and ribosome. In terms of biological role, the globular domain of the protein is located near the polypeptide exit tunnel on the outside of the subunit, while an extended beta-hairpin is found that lines the wall of the exit tunnel in the center of the 70S ribosome. The sequence is that of Large ribosomal subunit protein uL22 from Oceanobacillus iheyensis (strain DSM 14371 / CIP 107618 / JCM 11309 / KCTC 3954 / HTE831).